The following is a 152-amino-acid chain: Large ribosomal subunit protein uL30 (152 aa).

It belongs to the universal ribosomal protein uL30 family. Part of the 50S ribosomal subunit.

This is Large ribosomal subunit protein uL30 from Methanobrevibacter smithii (strain ATCC 35061 / DSM 861 / OCM 144 / PS).